The following is a 172-amino-acid chain: Resuscitation-promoting factor RpfE (172 aa).

The N-terminal stretch at 1-28 is a signal peptide; the sequence is MKNARTTLIAAAIAGTLVTTSPAGIANA. The tract at residues 33-89 is disordered; the sequence is LDPNAAAGPDAVGFDPNLPPAPDAAPVDTPPAPEDAGFDPNLPPPLAPDFLSPPAEE. The segment covering 49–65 has biased composition (pro residues); sequence NLPPAPDAAPVDTPPAP.

The protein belongs to the transglycosylase family. Rpf subfamily. Interacts with RipA.

Its function is as follows. Factor that stimulates resuscitation of dormant cells. Has peptidoglycan (PG) hydrolytic activity. Active in the pM concentration range. Has little to no effect on actively-growing cells. PG fragments could either directly activate the resuscitation pathway of dormant bacteria or serve as a substrate for endogenous Rpf, resulting in low molecular weight products with resuscitation activity. Functionally, stimulates growth of stationary phase M.bovis (a slow-growing Mycobacterium), reduces the lag phase of diluted fast-growers M.smegmatis and Micrococcus luteus. Sequential gene disruption indicates RpfB and RpfE are higher than RpfD and RpfC in functional hierarchy. The sequence is that of Resuscitation-promoting factor RpfE (rpfE) from Mycobacterium tuberculosis (strain ATCC 25618 / H37Rv).